Here is a 92-residue protein sequence, read N- to C-terminus: Small ribosomal subunit protein uS19 (92 aa).

It belongs to the universal ribosomal protein uS19 family.

Protein S19 forms a complex with S13 that binds strongly to the 16S ribosomal RNA. The sequence is that of Small ribosomal subunit protein uS19 (rpsS) from Rickettsia prowazekii (strain Madrid E).